The chain runs to 205 residues: Putative protein phosphatase inhibitor 2-like protein 1 (205 aa).

Disordered stretches follow at residues 1-44 (MAAS…SKKS), 64-92 (GLMK…TETT), 107-148 (AEGL…TLHY), and 171-205 (VEEM…SRSS). Required for binding PPP1CC regions lie at residues 12–17 (KGILKD) and 43–55 (KSQK…ILAT). Positions 17 to 26 (DNTSTTSSMV) are enriched in polar residues. Residues 30-44 (EHPRGSVHEQLSKKS) are compositionally biased toward basic and acidic residues. Thr73 is subject to Phosphothreonine; by GSK3. Acidic residues-rich tracts occupy residues 80–91 (GDDEDACSDTET) and 121–130 (SSGEEDSDLS). Ser87 is modified (phosphoserine; by CK2). Residues 131–144 (PEEREKKRQFEMRR) show a composition bias toward basic and acidic residues. Residues 147–150 (HYNE) are required for binding PPP1CC catalytic center, displacing metal ions and inhibition of PPP1CC catalytic activity. The span at 182–205 (SMNTEESNQGSTASDQQQNKSRSS) shows a compositional bias: polar residues.

Belongs to the protein phosphatase inhibitor 2 family.

Inhibitor of protein-phosphatase 1. This Homo sapiens (Human) protein is Putative protein phosphatase inhibitor 2-like protein 1 (PPP1R2P1).